Consider the following 842-residue polypeptide: Protein translocase subunit SecA (842 aa).

Residues Gln-85, 103 to 107 (GEGKT), and Asp-493 each bind ATP. Positions 825, 827, 836, and 837 each coordinate Zn(2+).

This sequence belongs to the SecA family. In terms of assembly, monomer and homodimer. Part of the essential Sec protein translocation apparatus which comprises SecA, SecYEG and auxiliary proteins SecDF. Other proteins may also be involved. Requires Zn(2+) as cofactor.

The protein localises to the cell membrane. It is found in the cytoplasm. The catalysed reaction is ATP + H2O + cellular proteinSide 1 = ADP + phosphate + cellular proteinSide 2.. Its function is as follows. Part of the Sec protein translocase complex. Interacts with the SecYEG preprotein conducting channel. Has a central role in coupling the hydrolysis of ATP to the transfer of proteins into and across the cell membrane, serving as an ATP-driven molecular motor driving the stepwise translocation of polypeptide chains across the membrane. The polypeptide is Protein translocase subunit SecA (Streptococcus equi subsp. equi (strain 4047)).